A 241-amino-acid chain; its full sequence is Ribonuclease PH (241 aa).

Phosphate contacts are provided by residues Arg87 and 125-127; that span reads GTR.

This sequence belongs to the RNase PH family. As to quaternary structure, homohexameric ring arranged as a trimer of dimers.

It catalyses the reaction tRNA(n+1) + phosphate = tRNA(n) + a ribonucleoside 5'-diphosphate. In terms of biological role, phosphorolytic 3'-5' exoribonuclease that plays an important role in tRNA 3'-end maturation. Removes nucleotide residues following the 3'-CCA terminus of tRNAs; can also add nucleotides to the ends of RNA molecules by using nucleoside diphosphates as substrates, but this may not be physiologically important. Probably plays a role in initiation of 16S rRNA degradation (leading to ribosome degradation) during starvation. In Salinispora tropica (strain ATCC BAA-916 / DSM 44818 / JCM 13857 / NBRC 105044 / CNB-440), this protein is Ribonuclease PH.